The chain runs to 444 residues: Methylenetetrahydrofolate--tRNA-(uracil-5-)-methyltransferase TrmFO (444 aa).

10-15 serves as a coordination point for FAD; that stretch reads GAGLAG.

It belongs to the MnmG family. TrmFO subfamily. FAD is required as a cofactor.

It localises to the cytoplasm. The catalysed reaction is uridine(54) in tRNA + (6R)-5,10-methylene-5,6,7,8-tetrahydrofolate + NADH + H(+) = 5-methyluridine(54) in tRNA + (6S)-5,6,7,8-tetrahydrofolate + NAD(+). The enzyme catalyses uridine(54) in tRNA + (6R)-5,10-methylene-5,6,7,8-tetrahydrofolate + NADPH + H(+) = 5-methyluridine(54) in tRNA + (6S)-5,6,7,8-tetrahydrofolate + NADP(+). In terms of biological role, catalyzes the folate-dependent formation of 5-methyl-uridine at position 54 (M-5-U54) in all tRNAs. In Streptococcus pneumoniae (strain ATCC 700669 / Spain 23F-1), this protein is Methylenetetrahydrofolate--tRNA-(uracil-5-)-methyltransferase TrmFO.